The chain runs to 692 residues: MKSVESLTEAEAAEELTRLADEIAAHDIRYYREDAPTISDAAYDALRRRNDELEAAFPHLIRENSPSLRIGAARAEQFAPVEHGVPMLSLDNAFSDADALEFDARVKRFLRLDEEVAYTAEPKIDGLSCSIRYENGRLVRAATRGDGRVGEDVTANVRTIGEIPQKLHGQAWPEVIEIRGEVYLGHAEFAALNEAAASAGQKTYANPRNAAAGSLRQIDPKITAQRPLRFFAYAWGFVSAPFAQTQWEALQALKAWGFRTTPQSRCVKGAEGLMEAYREMEAERPHLGFDIDGVVYKVDRLEWQQRLGFVSRAPRWGIARKFPAEQARTVLEAIDIQVGRTGALTPVARLTPVTVGGVVVTNATLHNADEIARLDVRVGDTVVLQRAGDVIPQILRVIPEERPKDSVPYDFPHVCPCPLRTEVVRETTASGAETVVRRCSGEFACPFQRINHLLHFVSRRAFDIEGLGEKQLTAFFERGWIKAPADIFRLHEKRDELLAMERMGETSVGNLLANIEARRTIGLDRFIYGLGIRHIGETTATVMARGYGTAAHFLEAMDKVAARDPEAVEELDALDQIGGAVIEAAAAFFGEDHNRAMVEDLAGQLTILDAEKPKTDTAVAGKTVVFTGALERMTRDEAKAQAERLGAKVSGSVSKKTDIVVAGPGAGSKLKTAAELGIQVLTEDEWLEMVGS.

Residues 40–44 (DAAYD), 89–90 (SL), and Glu121 contribute to the NAD(+) site. Residue Lys123 is the N6-AMP-lysine intermediate of the active site. Residues Arg144, Glu181, Lys297, and Lys321 each coordinate NAD(+). Zn(2+) contacts are provided by Cys415, Cys417, Cys439, and Cys445. In terms of domain architecture, BRCT spans 614–692 (KTDTAVAGKT…EDEWLEMVGS (79 aa)).

It belongs to the NAD-dependent DNA ligase family. LigA subfamily. Requires Mg(2+) as cofactor. The cofactor is Mn(2+).

The enzyme catalyses NAD(+) + (deoxyribonucleotide)n-3'-hydroxyl + 5'-phospho-(deoxyribonucleotide)m = (deoxyribonucleotide)n+m + AMP + beta-nicotinamide D-nucleotide.. In terms of biological role, DNA ligase that catalyzes the formation of phosphodiester linkages between 5'-phosphoryl and 3'-hydroxyl groups in double-stranded DNA using NAD as a coenzyme and as the energy source for the reaction. It is essential for DNA replication and repair of damaged DNA. The chain is DNA ligase from Phenylobacterium zucineum (strain HLK1).